Reading from the N-terminus, the 517-residue chain is Ubiquitin carboxyl-terminal hydrolase 30 (517 aa).

Residues 1–35 (MLSSRAQAARTAADKALQRFLRTGAAVRYKVMKNW) are Mitochondrial intermembrane-facing. The chain crosses the membrane as a helical span at residues 36–56 (GVIGGIAAALAAGIYVIWGPI). At 57 to 517 (TERKKRRKGL…QQGREYRSEE (461 aa)) the chain is on the cytoplasmic side. One can recognise a USP domain in the interval 68–502 (PGLVNLGNTC…SAYLLFYERV (435 aa)). Catalysis depends on Cys77, which acts as the Nucleophile. The tract at residues 198–221 (MAPRQVTCHTRGSPHPTTNHWKSQ) is disordered. A compositionally biased stretch (polar residues) spans 204-218 (TCHTRGSPHPTTNHW). Glycyl lysine isopeptide (Lys-Gly) (interchain with G-Cter in ubiquitin) cross-links involve residues Lys235 and Lys289. The disordered stretch occupies residues 364–395 (SQHGPKATENPGSAPEVQDAQAAPKPGLSQPG). Residue His452 is the Proton acceptor of the active site.

The protein belongs to the peptidase C19 family. Post-translationally, ubiquitinated by parkin (PRKN) at Lys-235 and Lys-289, leading to its degradation.

The protein resides in the mitochondrion outer membrane. It carries out the reaction Thiol-dependent hydrolysis of ester, thioester, amide, peptide and isopeptide bonds formed by the C-terminal Gly of ubiquitin (a 76-residue protein attached to proteins as an intracellular targeting signal).. Its activity is regulated as follows. Inhibited by the diterpenoid derivative 15-oxospiramilactone (S3). Deubiquitinating enzyme tethered to the mitochondrial outer membrane that acts as a key inhibitor of mitophagy by counteracting the action of parkin (PRKN): hydrolyzes ubiquitin attached by parkin on target proteins, such as RHOT1/MIRO1 and TOMM20, thereby blocking parkin's ability to drive mitophagy. Preferentially cleaves 'Lys-6'- and 'Lys-11'-linked polyubiquitin chains, 2 types of linkage that participate in mitophagic signaling. Does not cleave efficiently polyubiquitin phosphorylated at 'Ser-65'. Acts as negative regulator of mitochondrial fusion by mediating deubiquitination of MFN1 and MFN2. This is Ubiquitin carboxyl-terminal hydrolase 30 (Usp30) from Mus musculus (Mouse).